Consider the following 199-residue polypeptide: Peptidyl-tRNA hydrolase (199 aa).

Tyr18 contacts tRNA. Residue His23 is the Proton acceptor of the active site. Residues Tyr69, Asn71, and Asn117 each contribute to the tRNA site.

The protein belongs to the PTH family. As to quaternary structure, monomer.

Its subcellular location is the cytoplasm. The catalysed reaction is an N-acyl-L-alpha-aminoacyl-tRNA + H2O = an N-acyl-L-amino acid + a tRNA + H(+). Functionally, hydrolyzes ribosome-free peptidyl-tRNAs (with 1 or more amino acids incorporated), which drop off the ribosome during protein synthesis, or as a result of ribosome stalling. In terms of biological role, catalyzes the release of premature peptidyl moieties from peptidyl-tRNA molecules trapped in stalled 50S ribosomal subunits, and thus maintains levels of free tRNAs and 50S ribosomes. In Prochlorococcus marinus (strain MIT 9515), this protein is Peptidyl-tRNA hydrolase.